Consider the following 141-residue polypeptide: Large ribosomal subunit protein uL11 (141 aa).

Belongs to the universal ribosomal protein uL11 family. As to quaternary structure, part of the ribosomal stalk of the 50S ribosomal subunit. Interacts with L10 and the large rRNA to form the base of the stalk. L10 forms an elongated spine to which L12 dimers bind in a sequential fashion forming a multimeric L10(L12)X complex. Post-translationally, one or more lysine residues are methylated.

Its function is as follows. Forms part of the ribosomal stalk which helps the ribosome interact with GTP-bound translation factors. In Streptococcus suis (strain 98HAH33), this protein is Large ribosomal subunit protein uL11.